The primary structure comprises 211 residues: Probable molybdenum cofactor guanylyltransferase (211 aa).

GTP is bound by residues 21-23, K33, D84, and D116; that span reads LAG. Mg(2+) is bound at residue D116.

It belongs to the MobA family. The cofactor is Mg(2+).

Its subcellular location is the cytoplasm. The catalysed reaction is Mo-molybdopterin + GTP + H(+) = Mo-molybdopterin guanine dinucleotide + diphosphate. In terms of biological role, transfers a GMP moiety from GTP to Mo-molybdopterin (Mo-MPT) cofactor (Moco or molybdenum cofactor) to form Mo-molybdopterin guanine dinucleotide (Mo-MGD) cofactor. In Rhodopirellula baltica (strain DSM 10527 / NCIMB 13988 / SH1), this protein is Probable molybdenum cofactor guanylyltransferase.